Reading from the N-terminus, the 471-residue chain is A-type ATP synthase subunit B (471 aa).

Belongs to the ATPase alpha/beta chains family. In terms of assembly, has multiple subunits with at least A(3), B(3), C, D, E, F, H, I and proteolipid K(x).

It localises to the cell membrane. Functionally, component of the A-type ATP synthase that produces ATP from ADP in the presence of a proton gradient across the membrane. The B chain is a regulatory subunit. This is A-type ATP synthase subunit B from Halobacterium salinarum (strain ATCC 29341 / DSM 671 / R1).